The chain runs to 293 residues: 4-hydroxy-tetrahydrodipicolinate synthase (293 aa).

Thr-45 is a pyruvate binding site. Tyr-133 (proton donor/acceptor) is an active-site residue. Lys-162 functions as the Schiff-base intermediate with substrate in the catalytic mechanism. Ile-204 is a pyruvate binding site.

It belongs to the DapA family. As to quaternary structure, homotetramer; dimer of dimers.

The protein localises to the cytoplasm. The enzyme catalyses L-aspartate 4-semialdehyde + pyruvate = (2S,4S)-4-hydroxy-2,3,4,5-tetrahydrodipicolinate + H2O + H(+). It participates in amino-acid biosynthesis; L-lysine biosynthesis via DAP pathway; (S)-tetrahydrodipicolinate from L-aspartate: step 3/4. Its function is as follows. Catalyzes the condensation of (S)-aspartate-beta-semialdehyde [(S)-ASA] and pyruvate to 4-hydroxy-tetrahydrodipicolinate (HTPA). The polypeptide is 4-hydroxy-tetrahydrodipicolinate synthase (Brucella suis biovar 1 (strain 1330)).